The following is a 309-amino-acid chain: Probable nitrogen assimilation transcriptional activator (309 aa).

In terms of domain architecture, HTH lysR-type spans M1–T57. The segment at residues F18–K37 is a DNA-binding region (H-T-H motif).

This sequence belongs to the LysR transcriptional regulatory family.

Its function is as follows. Seems to regulate utilization of fixed nitrogen by controlling the expression of a certain gene(s) involved in nitrogen metabolism. The sequence is that of Probable nitrogen assimilation transcriptional activator (ntcB) from Synechococcus elongatus (strain ATCC 33912 / PCC 7942 / FACHB-805) (Anacystis nidulans R2).